Reading from the N-terminus, the 354-residue chain is Glycerol-1-phosphate dehydrogenase [NAD(P)+] (354 aa).

NAD(+)-binding positions include 103–107 (GRSVD) and 125–128 (TAAS). Asp-130 contacts substrate. Ser-134 contributes to the NAD(+) binding site. Residue Asp-176 participates in substrate binding. Positions 176 and 255 each coordinate Zn(2+). His-259 contacts substrate. A Zn(2+)-binding site is contributed by His-271.

It belongs to the glycerol-1-phosphate dehydrogenase family. Homodimer. Requires Zn(2+) as cofactor.

It localises to the cytoplasm. It carries out the reaction sn-glycerol 1-phosphate + NAD(+) = dihydroxyacetone phosphate + NADH + H(+). The catalysed reaction is sn-glycerol 1-phosphate + NADP(+) = dihydroxyacetone phosphate + NADPH + H(+). Its pathway is membrane lipid metabolism; glycerophospholipid metabolism. Its function is as follows. Catalyzes the NAD(P)H-dependent reduction of dihydroxyacetonephosphate (DHAP or glycerone phosphate) to glycerol 1-phosphate (G1P). The G1P thus generated is used as the glycerophosphate backbone of phospholipids in the cellular membranes of Archaea. The polypeptide is Glycerol-1-phosphate dehydrogenase [NAD(P)+] (Nitrosopumilus maritimus (strain SCM1)).